The primary structure comprises 92 residues: MAKGQSLQDPYLNALRRERIPVSIYLVNGIKLQGQIESFDQFVILLKNTVSQMVYKHAISTVVPARSVSHNNGGTSHTQQAPAVEAVADKAE.

The Sm domain maps to 9–68 (DPYLNALRRERIPVSIYLVNGIKLQGQIESFDQFVILLKNTVSQMVYKHAISTVVPARSV). Residues 69–81 (SHNNGGTSHTQQA) show a composition bias toward polar residues. The disordered stretch occupies residues 69-92 (SHNNGGTSHTQQAPAVEAVADKAE).

This sequence belongs to the Hfq family. In terms of assembly, homohexamer.

Functionally, RNA chaperone that binds small regulatory RNA (sRNAs) and mRNAs to facilitate mRNA translational regulation in response to envelope stress, environmental stress and changes in metabolite concentrations. Also binds with high specificity to tRNAs. The sequence is that of RNA-binding protein Hfq from Actinobacillus pleuropneumoniae serotype 5b (strain L20).